Reading from the N-terminus, the 498-residue chain is ATP synthase subunit beta, chloroplastic (498 aa).

172–179 is a binding site for ATP; sequence GGAGVGKT.

The protein belongs to the ATPase alpha/beta chains family. As to quaternary structure, F-type ATPases have 2 components, CF(1) - the catalytic core - and CF(0) - the membrane proton channel. CF(1) has five subunits: alpha(3), beta(3), gamma(1), delta(1), epsilon(1). CF(0) has four main subunits: a(1), b(1), b'(1) and c(9-12).

The protein localises to the plastid. The protein resides in the chloroplast thylakoid membrane. The enzyme catalyses ATP + H2O + 4 H(+)(in) = ADP + phosphate + 5 H(+)(out). Functionally, produces ATP from ADP in the presence of a proton gradient across the membrane. The catalytic sites are hosted primarily by the beta subunits. The sequence is that of ATP synthase subunit beta, chloroplastic from Myristica fragrans (Nutmeg).